Reading from the N-terminus, the 270-residue chain is MTVNTKTYSARAETHASPVAQRLFRLMESKKTNLCASIDVDTTKEFLELIDKLGPYVCLIKTHIDIINDFSYESTIEPLLELSRKHQFMIFEDRKFADIGNTVKKQYIGGVYKISSWADITNAHGVTGNGVVEGLKQGAKETTTDQEPRGLLMLAELSSVGSLAYGEYSQKTVEIAKSDKEFVIGFIAQRDMGGQEEGFDWIIMTPGVGLDDKGDGLGQQYRTVNEVVSTGTDIIIVGRGLFGKGRDPEVEGKRYRDAGWNAYLKKTGQL.

Residues Asp-39, 61 to 63 (KTH), 93 to 102 (DRKFADIGNT), Tyr-221, and Arg-239 contribute to the substrate site. Lys-95 (proton donor) is an active-site residue.

The protein belongs to the OMP decarboxylase family.

The enzyme catalyses orotidine 5'-phosphate + H(+) = UMP + CO2. It functions in the pathway pyrimidine metabolism; UMP biosynthesis via de novo pathway; UMP from orotate: step 2/2. The polypeptide is Orotidine 5'-phosphate decarboxylase (URA3) (Candida dubliniensis (strain CD36 / ATCC MYA-646 / CBS 7987 / NCPF 3949 / NRRL Y-17841) (Yeast)).